We begin with the raw amino-acid sequence, 688 residues long: Potassium-transporting ATPase ATP-binding subunit (688 aa).

Transmembrane regions (helical) follow at residues 35–55, 62–82, 219–239, and 260–280; these read VMMV…VQFA, AVFS…ANLA, IALS…VVTL, and VLVA…LSAI. The active-site 4-aspartylphosphate intermediate is D313. Residues D350, E354, 383 to 390, and K401 contribute to the ATP site; that span reads FSAQTRMS. 2 residues coordinate Mg(2+): D524 and D528. The next 3 helical transmembrane spans lie at 594–614, 622–642, and 668–688; these read FAIL…LNLM, AILS…PLAL, and VVLP…MGWI.

It belongs to the cation transport ATPase (P-type) (TC 3.A.3) family. Type IA subfamily. As to quaternary structure, the system is composed of three essential subunits: KdpA, KdpB and KdpC.

The protein localises to the cell inner membrane. It carries out the reaction K(+)(out) + ATP + H2O = K(+)(in) + ADP + phosphate + H(+). Its function is as follows. Part of the high-affinity ATP-driven potassium transport (or Kdp) system, which catalyzes the hydrolysis of ATP coupled with the electrogenic transport of potassium into the cytoplasm. This subunit is responsible for energy coupling to the transport system and for the release of the potassium ions to the cytoplasm. The polypeptide is Potassium-transporting ATPase ATP-binding subunit (Tolumonas auensis (strain DSM 9187 / NBRC 110442 / TA 4)).